The primary structure comprises 267 residues: Hydroxynaphthalene reductase-like protein Arp2 (267 aa).

NADP(+)-binding residues include Ile25, Asn45, Asp71, and Asn98. Residues Ser147 and Ser148 each act as proton donor in the active site. 4 residues coordinate NADP(+): Tyr162, Lys166, Val195, and Thr197. The Proton acceptor role is filled by Tyr162. Lys166 serves as the catalytic Lowers pKa of active site Tyr.

This sequence belongs to the short-chain dehydrogenases/reductases (SDR) family.

Hydroxynaphthalene reductase-like protein; part of the Pks2 gene cluster that mediates the formation of infectious structures (appressoria), enabling these fungi to kill insects faster. The product of the Pks2 gene cluster is different from the one of Pks1 and has still not been identified. The protein is Hydroxynaphthalene reductase-like protein Arp2 of Metarhizium robertsii (strain ARSEF 23 / ATCC MYA-3075) (Metarhizium anisopliae (strain ARSEF 23)).